The following is a 264-amino-acid chain: MQQYLDLMRHVLEHGDRKTDRTGTGTVSVFGWQMRFRLAEGFPLLTTKKLHTRSIIHELLWFIRGDTNIRYLKDHGVSIWDEWADENGDLGPVYGKQWRRWETADGRSVDQLAQLIDGIKRNPDSRRHIVSAWNPGEVGSMALPPCHALFQFYVAGGRLSCQLYQRSADIFLGVPFNIASYALLTMMVAQVCDLEPGDFVWTGGDCHLYLNHLQQAEEQLQRTPYPLPRMILNPEVRDLFAFRFEDFTLEGYTAHPHIKAPVAV.

Arg-21 lines the dUMP pocket. Position 51 (His-51) interacts with (6R)-5,10-methylene-5,6,7,8-tetrahydrofolate. 126–127 (RR) contributes to the dUMP binding site. The active-site Nucleophile is the Cys-146. Residues 166–169 (RSAD), Asn-177, and 207–209 (HLY) contribute to the dUMP site. Asp-169 contacts (6R)-5,10-methylene-5,6,7,8-tetrahydrofolate. Residue Ala-263 participates in (6R)-5,10-methylene-5,6,7,8-tetrahydrofolate binding.

This sequence belongs to the thymidylate synthase family. Bacterial-type ThyA subfamily. Homodimer.

Its subcellular location is the cytoplasm. It catalyses the reaction dUMP + (6R)-5,10-methylene-5,6,7,8-tetrahydrofolate = 7,8-dihydrofolate + dTMP. The protein operates within pyrimidine metabolism; dTTP biosynthesis. Catalyzes the reductive methylation of 2'-deoxyuridine-5'-monophosphate (dUMP) to 2'-deoxythymidine-5'-monophosphate (dTMP) while utilizing 5,10-methylenetetrahydrofolate (mTHF) as the methyl donor and reductant in the reaction, yielding dihydrofolate (DHF) as a by-product. This enzymatic reaction provides an intracellular de novo source of dTMP, an essential precursor for DNA biosynthesis. The protein is Thymidylate synthase of Azoarcus sp. (strain BH72).